Consider the following 113-residue polypeptide: Protein translation factor SUI1 homolog (113 aa).

This sequence belongs to the SUI1 family.

Probably involved in translation. The protein is Protein translation factor SUI1 homolog of Salix bakko (Japanese willow).